A 299-amino-acid polypeptide reads, in one-letter code: Apolipoprotein E (299 aa).

The first 18 residues, 1-18, serve as a signal peptide directing secretion; it reads MKVLCTVLVVTLLAGCRA. A run of 7 repeats spans residues 74 to 95, 96 to 117, 118 to 139, 140 to 161, 162 to 183, 184 to 205, and 224 to 245. The interval 74–245 is 8 X 22 AA approximate tandem repeats; sequence VLMEDTMKAV…RLEEMREQME (172 aa). Met137 bears the Methionine sulfoxide mark. Ser141 is subject to Phosphoserine. Positions 152–162 are LDL and other lipoprotein receptors binding; sequence HLRKLRKRMLR. Residue 156 to 159 participates in heparin binding; it reads LRKR. The segment at 204-273 is lipid-binding and lipoprotein association; that stretch reads AALTGQPLQE…GWFEPMVEDM (70 aa). Residue 219 to 226 participates in heparin binding; the sequence is GKQLRGRL. The interval 261–273 is specificity for association with VLDL; the sequence is RLKGWFEPMVEDM.

The protein belongs to the apolipoprotein A1/A4/E family. As to quaternary structure, homotetramer. May interact with ABCA1; functionally associated with ABCA1 in the biogenesis of HDLs. May interact with APP/A4 amyloid-beta peptide; the interaction is extremely stable in vitro but its physiological significance is unclear. May interact with MAPT. May interact with MAP2. In the cerebrospinal fluid, interacts with secreted SORL1. Interacts with PMEL; this allows the loading of PMEL luminal fragment on ILVs to induce fibril nucleation. In terms of processing, APOE exists as multiple glycosylated and sialylated glycoforms within cells and in plasma. The extent of glycosylation and sialylation are tissue and context specific. Post-translationally, glycated in plasma VLDL. Phosphorylated by FAM20C in the extracellular medium.

The protein localises to the secreted. Its subcellular location is the extracellular space. It localises to the extracellular matrix. It is found in the extracellular vesicle. The protein resides in the endosome. The protein localises to the multivesicular body. APOE is an apolipoprotein, a protein associating with lipid particles, that mainly functions in lipoprotein-mediated lipid transport between organs via the plasma and interstitial fluids. APOE is a core component of plasma lipoproteins and is involved in their production, conversion and clearance. Apolipoproteins are amphipathic molecules that interact both with lipids of the lipoprotein particle core and the aqueous environment of the plasma. As such, APOE associates with chylomicrons, chylomicron remnants, very low density lipoproteins (VLDL) and intermediate density lipoproteins (IDL) but shows a preferential binding to high-density lipoproteins (HDL). It also binds a wide range of cellular receptors including the LDL receptor/LDLR, the LDL receptor-related proteins LRP1, LRP2 and LRP8 and the very low-density lipoprotein receptor/VLDLR that mediate the cellular uptake of the APOE-containing lipoprotein particles. Finally, APOE also has a heparin-binding activity and binds heparan-sulfate proteoglycans on the surface of cells, a property that supports the capture and the receptor-mediated uptake of APOE-containing lipoproteins by cells. A main function of APOE is to mediate lipoprotein clearance through the uptake of chylomicrons, VLDLs, and HDLs by hepatocytes. APOE is also involved in the biosynthesis by the liver of VLDLs as well as their uptake by peripheral tissues ensuring the delivery of triglycerides and energy storage in muscle, heart and adipose tissues. By participating in the lipoprotein-mediated distribution of lipids among tissues, APOE plays a critical role in plasma and tissues lipid homeostasis. APOE is also involved in two steps of reverse cholesterol transport, the HDLs-mediated transport of cholesterol from peripheral tissues to the liver, and thereby plays an important role in cholesterol homeostasis. First, it is functionally associated with ABCA1 in the biogenesis of HDLs in tissues. Second, it is enriched in circulating HDLs and mediates their uptake by hepatocytes. APOE also plays an important role in lipid transport in the central nervous system, regulating neuron survival and sprouting. The chain is Apolipoprotein E (APOE) from Octodon degus (Degu).